The following is a 157-amino-acid chain: Probable chemoreceptor glutamine deamidase CheD (157 aa).

The protein belongs to the CheD family.

It carries out the reaction L-glutaminyl-[protein] + H2O = L-glutamyl-[protein] + NH4(+). Functionally, probably deamidates glutamine residues to glutamate on methyl-accepting chemotaxis receptors (MCPs), playing an important role in chemotaxis. In Archaeoglobus fulgidus (strain ATCC 49558 / DSM 4304 / JCM 9628 / NBRC 100126 / VC-16), this protein is Probable chemoreceptor glutamine deamidase CheD.